A 337-amino-acid chain; its full sequence is Retrovirus-related Pol polyprotein from type-1 retrotransposable element R1 (337 aa).

Residues 1–118 (GCPQGSISGP…KSARYLGVCM (118 aa)) form the Reverse transcriptase domain. Positions 253-337 (KRARSCKLMK…ACPCGAPRED (85 aa)) are nucleic acid-binding endonuclease.

The enzyme catalyses DNA(n) + a 2'-deoxyribonucleoside 5'-triphosphate = DNA(n+1) + diphosphate. The chain is Retrovirus-related Pol polyprotein from type-1 retrotransposable element R1 from Nasonia vitripennis (Parasitic wasp).